Here is a 122-residue protein sequence, read N- to C-terminus: Large ribosomal subunit protein uL14 (122 aa).

It belongs to the universal ribosomal protein uL14 family. In terms of assembly, part of the 50S ribosomal subunit. Forms a cluster with proteins L3 and L19. In the 70S ribosome, L14 and L19 interact and together make contacts with the 16S rRNA in bridges B5 and B8.

Its function is as follows. Binds to 23S rRNA. Forms part of two intersubunit bridges in the 70S ribosome. The protein is Large ribosomal subunit protein uL14 of Aeromonas salmonicida (strain A449).